A 247-amino-acid chain; its full sequence is Carboxy-S-adenosyl-L-methionine synthase (247 aa).

S-adenosyl-L-methionine-binding positions include Tyr39, 64–66, 89–90, 117–118, Asn132, and Arg199; these read GCS, DN, and DI.

The protein belongs to the class I-like SAM-binding methyltransferase superfamily. Cx-SAM synthase family. In terms of assembly, homodimer.

The enzyme catalyses prephenate + S-adenosyl-L-methionine = carboxy-S-adenosyl-L-methionine + 3-phenylpyruvate + H2O. In terms of biological role, catalyzes the conversion of S-adenosyl-L-methionine (SAM) to carboxy-S-adenosyl-L-methionine (Cx-SAM). The protein is Carboxy-S-adenosyl-L-methionine synthase of Pectobacterium atrosepticum (strain SCRI 1043 / ATCC BAA-672) (Erwinia carotovora subsp. atroseptica).